The sequence spans 138 residues: Large ribosomal subunit protein uL16 (138 aa).

Belongs to the universal ribosomal protein uL16 family. Part of the 50S ribosomal subunit.

Functionally, binds 23S rRNA and is also seen to make contacts with the A and possibly P site tRNAs. In Mycoplasmoides gallisepticum (strain R(low / passage 15 / clone 2)) (Mycoplasma gallisepticum), this protein is Large ribosomal subunit protein uL16.